We begin with the raw amino-acid sequence, 546 residues long: Probable protein kinase UbiB (546 aa).

The 379-residue stretch at 124–502 folds into the Protein kinase domain; sequence DFEIKPLASA…HVRQGQSRYF (379 aa). ATP-binding positions include 130–138 and Lys153; that span reads LASASIAQV. Asp288 functions as the Proton acceptor in the catalytic mechanism. 2 consecutive transmembrane segments (helical) span residues 501–521 and 522–542; these read YFLGIGATLVLSGTFLLVSRP and EWGLMPGWLMAGGLIAWFVGW.

Belongs to the ABC1 family. UbiB subfamily.

It localises to the cell inner membrane. The protein operates within cofactor biosynthesis; ubiquinone biosynthesis [regulation]. Is probably a protein kinase regulator of UbiI activity which is involved in aerobic coenzyme Q (ubiquinone) biosynthesis. The sequence is that of Probable protein kinase UbiB from Shigella sonnei (strain Ss046).